A 420-amino-acid chain; its full sequence is UDP-N-acetylglucosamine 1-carboxyvinyltransferase (420 aa).

22–23 is a phosphoenolpyruvate binding site; sequence KN. A UDP-N-acetyl-alpha-D-glucosamine-binding site is contributed by arginine 93. The active-site Proton donor is the cysteine 117. Cysteine 117 bears the 2-(S-cysteinyl)pyruvic acid O-phosphothioketal mark. The UDP-N-acetyl-alpha-D-glucosamine site is built by aspartate 307 and isoleucine 329.

Belongs to the EPSP synthase family. MurA subfamily.

It is found in the cytoplasm. The enzyme catalyses phosphoenolpyruvate + UDP-N-acetyl-alpha-D-glucosamine = UDP-N-acetyl-3-O-(1-carboxyvinyl)-alpha-D-glucosamine + phosphate. It participates in cell wall biogenesis; peptidoglycan biosynthesis. In terms of biological role, cell wall formation. Adds enolpyruvyl to UDP-N-acetylglucosamine. This is UDP-N-acetylglucosamine 1-carboxyvinyltransferase from Saccharophagus degradans (strain 2-40 / ATCC 43961 / DSM 17024).